Here is a 143-residue protein sequence, read N- to C-terminus: MTKTFSAKAADVVHEWFVIDATDKVLGRVASEVALRLRGKHKAIYTPHVDTGDFIVIINAAQLRVTGAKSTDKIYYSHSGYPGGISSVNFRDMQAKFPGRALEKAVKGMLPKGPLGYAMIKKLKVYGGAEHPHTAQQPKVLEL.

The protein belongs to the universal ribosomal protein uL13 family. In terms of assembly, part of the 50S ribosomal subunit.

In terms of biological role, this protein is one of the early assembly proteins of the 50S ribosomal subunit, although it is not seen to bind rRNA by itself. It is important during the early stages of 50S assembly. The chain is Large ribosomal subunit protein uL13 from Albidiferax ferrireducens (strain ATCC BAA-621 / DSM 15236 / T118) (Rhodoferax ferrireducens).